We begin with the raw amino-acid sequence, 375 residues long: Dual-specificity RNA methyltransferase RlmN (375 aa).

Glu-93 serves as the catalytic Proton acceptor. The Radical SAM core domain maps to 99–346 (ETNRGTLCVS…TTTRKTRGDD (248 aa)). Cysteines 106 and 351 form a disulfide. [4Fe-4S] cluster-binding residues include Cys-113, Cys-117, and Cys-120. S-adenosyl-L-methionine is bound by residues 177–178 (GE), Ser-209, 231–233 (SLH), and Asn-308. Residue Cys-351 is the S-methylcysteine intermediate of the active site.

This sequence belongs to the radical SAM superfamily. RlmN family. It depends on [4Fe-4S] cluster as a cofactor.

The protein localises to the cytoplasm. It carries out the reaction adenosine(2503) in 23S rRNA + 2 reduced [2Fe-2S]-[ferredoxin] + 2 S-adenosyl-L-methionine = 2-methyladenosine(2503) in 23S rRNA + 5'-deoxyadenosine + L-methionine + 2 oxidized [2Fe-2S]-[ferredoxin] + S-adenosyl-L-homocysteine. The catalysed reaction is adenosine(37) in tRNA + 2 reduced [2Fe-2S]-[ferredoxin] + 2 S-adenosyl-L-methionine = 2-methyladenosine(37) in tRNA + 5'-deoxyadenosine + L-methionine + 2 oxidized [2Fe-2S]-[ferredoxin] + S-adenosyl-L-homocysteine. In terms of biological role, specifically methylates position 2 of adenine 2503 in 23S rRNA and position 2 of adenine 37 in tRNAs. m2A2503 modification seems to play a crucial role in the proofreading step occurring at the peptidyl transferase center and thus would serve to optimize ribosomal fidelity. The polypeptide is Dual-specificity RNA methyltransferase RlmN (Azoarcus sp. (strain BH72)).